The chain runs to 225 residues: 7-cyano-7-deazaguanine synthase (225 aa).

Position 10-20 (10-20 (FSGGQDSTTLA)) interacts with ATP. Residues Cys-190, Cys-205, Cys-208, and Cys-211 each coordinate Zn(2+).

It belongs to the QueC family. The cofactor is Zn(2+).

The enzyme catalyses 7-carboxy-7-deazaguanine + NH4(+) + ATP = 7-cyano-7-deazaguanine + ADP + phosphate + H2O + H(+). It functions in the pathway purine metabolism; 7-cyano-7-deazaguanine biosynthesis. Its function is as follows. Catalyzes the ATP-dependent conversion of 7-carboxy-7-deazaguanine (CDG) to 7-cyano-7-deazaguanine (preQ(0)). This chain is 7-cyano-7-deazaguanine synthase, found in Helicobacter acinonychis (strain Sheeba).